The following is a 518-amino-acid chain: Centromere protein T (518 aa).

The tract at residues 1-70 (MADLSSPDGD…RKHSHGTGSV (70 aa)) is disordered. Basic and acidic residues predominate over residues 19–28 (HVLDTADSHT). The span at 34–57 (STQTNPQRRRSQTPYSKRQGSQRK) shows a compositional bias: polar residues. T86 is modified (phosphothreonine). The interval 94–381 (ILLTAPESST…EPHQLFEPPP (288 aa)) is flexible stalk domain. 3 disordered regions span residues 102–156 (STVM…KRKQ), 271–362 (VHHS…ELSS), and 375–412 (QLFE…HQDP). Residues 294–306 (TPSTGTRPQSQMS) show a composition bias toward polar residues. Phosphoserine occurs at positions 313, 324, 333, 345, 346, 357, and 382. Positions 326 to 343 (ELREAVGSKEAEEPKDLE) are enriched in basic and acidic residues. The segment covering 384–395 (GVAAVSSESVPA) has biased composition (low complexity).

Belongs to the CENP-T/CNN1 family. In terms of assembly, component of the CENPA-CAD complex, composed of CENPI, CENPK, CENPL, CENPO, CENPP, CENPQ, CENPR and CENPS. The CENPA-CAD complex is probably recruited on centromeres by the CENPA-NAC complex, at least composed of CENPA, CENPC, CENPH, CENPM, CENPN, CENPT and CENPU. Identified in a centromeric complex containing histones H2A, H2B, H3 and H4, and at least CENPA, CENPB, CENPC, CENPT, CENPN, HJURP, SUPT16H, SSRP1 and RSF1. Interacts (via N-terminus) with the NDC80 complex. Heterodimer with CENPW; this dimer coassembles with CENPS-CENPX heterodimers at centromeres to form the tetrameric CENP-T-W-S-X complex. Post-translationally, dynamically phosphorylated during the cell cycle. Phosphorylated during G2 phase, metaphase and anaphase, but not during telophase or G1 phase.

The protein localises to the nucleus. It localises to the chromosome. It is found in the centromere. Its subcellular location is the kinetochore. Component of the CENPA-NAC (nucleosome-associated) complex, a complex that plays a central role in assembly of kinetochore proteins, mitotic progression and chromosome segregation. The CENPA-NAC complex recruits the CENPA-CAD (nucleosome distal) complex and may be involved in incorporation of newly synthesized CENPA into centromeres. Part of a nucleosome-associated complex that binds specifically to histone H3-containing nucleosomes at the centromere, as opposed to nucleosomes containing CENPA. Component of the heterotetrameric CENP-T-W-S-X complex that binds and supercoils DNA, and plays an important role in kinetochore assembly. CENPT has a fundamental role in kinetochore assembly and function. It is one of the inner kinetochore proteins, with most further proteins binding downstream. Required for normal chromosome organization and normal progress through mitosis. The chain is Centromere protein T (Cenpt) from Rattus norvegicus (Rat).